The chain runs to 168 residues: Small ribosomal subunit protein uS8 (168 aa).

Residues 59–93 (EEFKKMKELAEKSPNPKMRRYLQQLIDYNKGTQYP) are not found in other S8 sequences.

Belongs to the universal ribosomal protein uS8 family. In terms of assembly, part of the 30S ribosomal subunit. Contacts proteins S5 and S12.

In terms of biological role, one of the primary rRNA binding proteins, it binds directly to 16S rRNA central domain where it helps coordinate assembly of the platform of the 30S subunit. This Aquifex pyrophilus protein is Small ribosomal subunit protein uS8.